We begin with the raw amino-acid sequence, 383 residues long: tRNA-specific 2-thiouridylase MnmA (383 aa).

ATP-binding positions include 30 to 37 (GMSGGVDS) and methionine 56. Residues 116–118 (NPD) form an interaction with target base in tRNA region. Cysteine 121 acts as the Nucleophile in catalysis. Cysteine 121 and cysteine 218 are oxidised to a cystine. Glycine 146 serves as a coordination point for ATP. The segment at 168-170 (KDQ) is interaction with tRNA. The active-site Cysteine persulfide intermediate is cysteine 218. The interval 330-331 (RY) is interaction with tRNA.

The protein belongs to the MnmA/TRMU family.

The protein resides in the cytoplasm. It carries out the reaction S-sulfanyl-L-cysteinyl-[protein] + uridine(34) in tRNA + AH2 + ATP = 2-thiouridine(34) in tRNA + L-cysteinyl-[protein] + A + AMP + diphosphate + H(+). Functionally, catalyzes the 2-thiolation of uridine at the wobble position (U34) of tRNA, leading to the formation of s(2)U34. This Haemophilus influenzae (strain 86-028NP) protein is tRNA-specific 2-thiouridylase MnmA.